Consider the following 407-residue polypeptide: Cell division protein FtsZ (407 aa).

GTP-binding positions include 18–22, 105–107, Glu136, Arg140, and Asp184; these read GGGVN and GTG. The segment at 312–407 is disordered; it reads FDGGQPPARR…EELDVPDFLK (96 aa). Low complexity-rich tracts occupy residues 336–348 and 368–377; these read AAPA…STRP and APATASGESS. Residues 381–390 are compositionally biased toward pro residues; that stretch reads VSPPHVPPAR. Residues 396–407 show a composition bias toward acidic residues; that stretch reads QAEELDVPDFLK.

Belongs to the FtsZ family. As to quaternary structure, homodimer. Polymerizes to form a dynamic ring structure in a strictly GTP-dependent manner. Interacts directly with several other division proteins.

The protein resides in the cytoplasm. Functionally, essential cell division protein that forms a contractile ring structure (Z ring) at the future cell division site. The regulation of the ring assembly controls the timing and the location of cell division. One of the functions of the FtsZ ring is to recruit other cell division proteins to the septum to produce a new cell wall between the dividing cells. Binds GTP and shows GTPase activity. This chain is Cell division protein FtsZ, found in Streptomyces griseus.